A 251-amino-acid chain; its full sequence is Triosephosphate isomerase (251 aa).

9-11 (NWK) provides a ligand contact to substrate. Residue His94 is the Electrophile of the active site. The Proton acceptor role is filled by Glu166. Substrate-binding positions include Gly172, Ser211, and 232-233 (GG).

This sequence belongs to the triosephosphate isomerase family. As to quaternary structure, homodimer.

The protein localises to the cytoplasm. It carries out the reaction D-glyceraldehyde 3-phosphate = dihydroxyacetone phosphate. It functions in the pathway carbohydrate biosynthesis; gluconeogenesis. It participates in carbohydrate degradation; glycolysis; D-glyceraldehyde 3-phosphate from glycerone phosphate: step 1/1. Its function is as follows. Involved in the gluconeogenesis. Catalyzes stereospecifically the conversion of dihydroxyacetone phosphate (DHAP) to D-glyceraldehyde-3-phosphate (G3P). The sequence is that of Triosephosphate isomerase from Xanthomonas axonopodis pv. citri (strain 306).